The chain runs to 197 residues: CRISPR system CMR subunit Cmr7 1 (197 aa).

The protein belongs to the CRISPR system Cmr7 family. As to quaternary structure, possible homodimer. Part of the CMR ribonucleoprotein complex, consisting of crRNA plus Cmr1/Cmr2/Cmr3/Cmr4/Cmr5/Cmr6 at 1:1 and possibly 3 Cmr7 dimers. A Cmr2/Cmr3/Cmr7 subcomplex without crRNA can also be isolated. It does not cleave target RNA.

The protein resides in the cytoplasm. Functionally, CRISPR (clustered regularly interspaced short palindromic repeat) is an adaptive immune system that provides protection against mobile genetic elements (viruses, transposable elements and conjugative plasmids). CRISPR clusters contain spacers, sequences complementary to antecedent mobile elements, and target invading nucleic acids. CRISPR clusters are transcribed and processed into CRISPR RNA (crRNA). The CMR complex degrades RNA complementary to the crRNA (target RNA) within UA dinucleotides, generating 3'-OH and 5'-phosphate ends. Activity is dependent on the 8 nt long 5' tag in the crRNA, an unpaired 3' flag on the target RNA, and is stimulated by ATP. Some cleavage of the guide crRNA can also be observed. This Saccharolobus solfataricus (strain ATCC 35092 / DSM 1617 / JCM 11322 / P2) (Sulfolobus solfataricus) protein is CRISPR system CMR subunit Cmr7 1 (cmr7A).